The sequence spans 489 residues: Capsid protein (489 aa).

The disordered stretch occupies residues 79–144 (GETSEEESDS…QPKTIPGQKQ (66 aa)). Over residues 81-94 (TSEEESDSGEEPEF) the composition is skewed to acidic residues. Over residues 95 to 110 (EQVRMDRTGGTEIPKE) the composition is skewed to basic and acidic residues. A Nuclear localization signal motif is present at residues 122–125 (RKRK). The span at 135-144 (QPKTIPGQKQ) shows a compositional bias: polar residues. The CCHC-type zinc-finger motif lies at 412–429 (CRCWICNIEGHYANECPN). A disordered region spans residues 467–489 (EEEEETSTEESDGSSTSEDSDSD).

Belongs to the caulimoviridae capsid protein family. As to quaternary structure, interacts (via nuclear localization signal) with host importin alpha.

Its subcellular location is the virion. The protein localises to the host nucleus. In terms of biological role, self assembles to form an icosahedral capsid, about 50 nm in diameter, nm, composed of 420 subunits of the viral capsid protein. The capsid encapsulates the genomic dsDNA. Following virus entry into host cell, provides nuclear import of the viral genome. Virus particles do not enter the nucleus, but dock at the nuclear membrane through the interaction with host importins. The protein is Capsid protein of Arabidopsis thaliana (Mouse-ear cress).